Here is a 942-residue protein sequence, read N- to C-terminus: Probable serine/threonine-protein kinase DDB_G0279719 (942 aa).

The Protein kinase domain occupies 4–617 (YEVVKLIGVG…IDLILQNKLF (614 aa)). ATP is bound by residues 10 to 18 (IGVGGEAKA) and lysine 33. Disordered stretches follow at residues 109–170 (NNNQ…INNN), 247–303 (SFSN…NGNT), 352–371 (QPPQ…GADV), and 408–445 (NDPS…LNIN). Over residues 258–272 (NSNDSNLHQSSSNSS) the composition is skewed to low complexity. The span at 288-303 (SPGTSTPYQKGSNGNT) shows a compositional bias: polar residues. 2 stretches are compositionally biased toward low complexity: residues 353–367 (PPQS…SSPT) and 410–432 (PSSH…PQSP). Residue aspartate 487 is the Proton acceptor of the active site. A disordered region spans residues 642-686 (TNSKSNSSNNLNNSNSNNDIINNNNNNNSSNNINNNNIVNLNNSY). Positions 675–703 (NNNNIVNLNNSYNNKQDKCEQRNKSLNQN) form a coiled coil.

This sequence belongs to the protein kinase superfamily. Ser/Thr protein kinase family.

It catalyses the reaction L-seryl-[protein] + ATP = O-phospho-L-seryl-[protein] + ADP + H(+). It carries out the reaction L-threonyl-[protein] + ATP = O-phospho-L-threonyl-[protein] + ADP + H(+). The protein is Probable serine/threonine-protein kinase DDB_G0279719 of Dictyostelium discoideum (Social amoeba).